The primary structure comprises 698 residues: MTITKSQQYLTHFRNIGIAAHIDAGKTTTTERILFFTGRIRNLGETHEGASQMDWMEQERERGITITAAATTAHWTHTETGEDYTVNIIDTPGHVDFTIEVERSMRVLDGAVAVFDSSQGVEPQSETVWRQADRYGVPRVAFANKMDKTGASFDLVVNDIRERLGAIPAPIQYPMGAENDFKGVIDIVRMQAHTFTNDLGTEIQVGDVPAEYMDKVNEMRQQLIEAAAEVDEDLMMKFLEGEEPTQQELIAAIRKGTIDKQIFPVLCGSALKNKGVQLLLDAVVDYLPSPLEVPSIKGTHEDGETVTEFPADPEGKLAALAFKIMADPYVGRLTFVRIYSGTLTSGSYVYNASKDKRERVGRLLKMHANSREEVTELKAGELGAVIGLKDAGTGNTLIGDGDDRVLLESIDIPEPVIKLAIEPKTKADQEKMGVGLQKLAEEDPTFKVETDQESGQTTIAGMGELHLEILVDRLKREYKVEANVGAPQVAYRETITKQVEVDSKFARQSGGRGQYGHVKLRVEPLEPGAGFIFENAVVGGTVPKEYIGPAQKGVEEAMQSGPMLGFPVVDIKVVIYDGSYHEVDSSEMAFKIAGSMGLKEAVQKGSPAILEPVMRVEVTTPEEYMGDVIGDLNSRRGQIQGMEARGNAQIVKAFVPLSEMFGYATDMRSKTQGRASYSMFFDHYTQVPTNLAQQLMKK.

The tr-type G domain occupies threonine 11 to leucine 291. GTP-binding positions include alanine 20 to threonine 27, aspartate 90 to histidine 94, and asparagine 144 to aspartate 147.

It belongs to the TRAFAC class translation factor GTPase superfamily. Classic translation factor GTPase family. EF-G/EF-2 subfamily.

It localises to the cytoplasm. Its function is as follows. Catalyzes the GTP-dependent ribosomal translocation step during translation elongation. During this step, the ribosome changes from the pre-translocational (PRE) to the post-translocational (POST) state as the newly formed A-site-bound peptidyl-tRNA and P-site-bound deacylated tRNA move to the P and E sites, respectively. Catalyzes the coordinated movement of the two tRNA molecules, the mRNA and conformational changes in the ribosome. This Deinococcus radiodurans (strain ATCC 13939 / DSM 20539 / JCM 16871 / CCUG 27074 / LMG 4051 / NBRC 15346 / NCIMB 9279 / VKM B-1422 / R1) protein is Elongation factor G.